A 316-amino-acid polypeptide reads, in one-letter code: L-lactate dehydrogenase (316 aa).

Residues Val-15, Asp-37, Lys-42, Tyr-68, and 82–83 contribute to the NAD(+) site; that span reads GL. Substrate contacts are provided by residues Gln-85, Arg-91, and 123-126; that span reads NPVD. NAD(+) contacts are provided by residues 121 to 123 and Thr-146; that span reads ASN. 151–154 is a binding site for substrate; the sequence is DTSR. The beta-D-fructose 1,6-bisphosphate site is built by Arg-156 and His-171. His-178 acts as the Proton acceptor in catalysis. Tyr-222 carries the phosphotyrosine modification. A substrate-binding site is contributed by Thr-231.

The protein belongs to the LDH/MDH superfamily. LDH family. As to quaternary structure, homotetramer.

The protein localises to the cytoplasm. The enzyme catalyses (S)-lactate + NAD(+) = pyruvate + NADH + H(+). Its pathway is fermentation; pyruvate fermentation to lactate; (S)-lactate from pyruvate: step 1/1. With respect to regulation, allosterically activated by fructose 1,6-bisphosphate (FBP). Catalyzes the conversion of lactate to pyruvate. The protein is L-lactate dehydrogenase of Borrelia turicatae (strain 91E135).